A 157-amino-acid polypeptide reads, in one-letter code: Transcription elongation factor GreB (157 aa).

It belongs to the GreA/GreB family. GreB subfamily.

In terms of biological role, necessary for efficient RNA polymerase transcription elongation past template-encoded arresting sites. The arresting sites in DNA have the property of trapping a certain fraction of elongating RNA polymerases that pass through, resulting in locked ternary complexes. Cleavage of the nascent transcript by cleavage factors such as GreA or GreB allows the resumption of elongation from the new 3'terminus. GreB releases sequences of up to 9 nucleotides in length. This chain is Transcription elongation factor GreB, found in Salmonella typhi.